Here is a 458-residue protein sequence, read N- to C-terminus: Riboflavin transporter 2 (458 aa).

Transmembrane regions (helical) follow at residues 11–31 (LFGMGSWVAINGIWVELPLIV), 38–58 (WYLPSYLTVLIQMANVGPLFV), 73–93 (PVIYSIVGLGVVATFLLAFFW), 97–117 (VPLAGATHSVPLLVLCFLLSV), and 146–166 (GVSGLVPAVVALVQGVGVVHC). Residues asparagine 168, asparagine 176, asparagine 182, and asparagine 199 are each glycosylated (N-linked (GlcNAc...) asparagine). Residues 204-224 (VFFLFLSAMMVVCLAAFLLLN) form a helical membrane-spanning segment. A disordered region spans residues 249 to 274 (DQALSLSHRPQEEKPMISSPDSHRRA). A run of 5 helical transmembrane segments spans residues 279–299 (FGTGFYSGPELAFIFVVLAWV), 325–345 (LAATMAAVANPVACFIAMFLP), 349–369 (LVLIGLLTIVGTGFGTYIMAM), 388–408 (IVIAWVLFVLTLSYVKVIIGV), and 417–437 (ALVWCGAVVQLGSMLGALSMF).

It belongs to the riboflavin transporter family.

The protein localises to the cell membrane. It catalyses the reaction riboflavin(in) = riboflavin(out). Its function is as follows. Plasma membrane transporter mediating the uptake by cells of the water soluble vitamin B2/riboflavin that plays a key role in biochemical oxidation-reduction reactions of the carbohydrate, lipid, and amino acid metabolism. The polypeptide is Riboflavin transporter 2 (rft2) (Salmo salar (Atlantic salmon)).